The following is a 180-amino-acid chain: LDLR chaperone boca (180 aa).

An N-terminal signal peptide occupies residues 1-18 (MQTRLVLLLLALTPLVLA). Acidic residues predominate over residues 48–61 (QWEEDEEPLEDDEL). The interval 48–78 (QWEEDEEPLEDDELPEHLRPQPKLDLSNLDS) is disordered. The structured core stretch occupies residues 93–166 (TLMTFVSVTG…QERCKGVTIE (74 aa)). The Prevents secretion from ER motif lies at 177–180 (KDEL).

This sequence belongs to the MESD family. As to quaternary structure, monomer. Interacts with Arrow and Yolkless.

It localises to the endoplasmic reticulum. Chaperone specifically assisting the folding of beta-propeller/EGF modules within the family of low-density lipoprotein receptors (LDLRs). Acts as a modulator of the Wg pathway, since some LDLRs are coreceptors for the canonical Wnt pathway. This chain is LDLR chaperone boca (boca), found in Drosophila melanogaster (Fruit fly).